Here is a 747-residue protein sequence, read N- to C-terminus: Probable type III restriction-modification enzyme HindVI Mod subunit (747 aa).

The tract at residues 267–270 (DPPY) is binding of S-adenosyl methionine.

This sequence belongs to the N(4)/N(6)-methyltransferase family. As to quaternary structure, homodimer, also forms a functional restriction-competent complex with Res.

It carries out the reaction a 2'-deoxyadenosine in DNA + S-adenosyl-L-methionine = an N(6)-methyl-2'-deoxyadenosine in DNA + S-adenosyl-L-homocysteine + H(+). In terms of biological role, a beta subtype methylase that binds the system-specific DNA recognition site 5'-CGAAT-3' and methylates A-4 (of only 1 strand). DNA restriction requires both the Res and Mod subunits. This Haemophilus influenzae (strain ATCC 51907 / DSM 11121 / KW20 / Rd) protein is Probable type III restriction-modification enzyme HindVI Mod subunit.